We begin with the raw amino-acid sequence, 254 residues long: Mitochondrial inner membrane protease ATP23 homolog (254 aa).

The interval 1–32 (MAQSGAKAADLSREPPGEQKPSPSSRQNEEDL) is disordered. A divalent metal cation is bound at residue histidine 133. Glutamate 134 is a catalytic residue. Histidine 137 contacts a divalent metal cation.

The protein belongs to the peptidase M76 family.

The chain is Mitochondrial inner membrane protease ATP23 homolog (atp23) from Danio rerio (Zebrafish).